The chain runs to 718 residues: Sodium/myo-inositol cotransporter (718 aa).

Residues 1–9 (MRAVLEAAD) are Extracellular-facing. A helical transmembrane segment spans residues 10-29 (IAVVALYFILVMCIGFFAMW). The Cytoplasmic segment spans residues 30 to 38 (KSNRSTVSG). Residues 39–57 (YFLAGRSMTWVAIGASLFV) form a helical membrane-spanning segment. The Extracellular segment spans residues 58-86 (SNIGSEHFIGLAGSGAASGFAVGAWEFNA). Residues 87–110 (LLLLQLLGWVFIPIYIRSGVYTMP) traverse the membrane as a helical segment. Residues 111–123 (EYLSKRFGGHRIQ) are Cytoplasmic-facing. Residues 124 to 144 (VYFAALSLLLYIFTKLSVDLY) form a helical membrane-spanning segment. Topologically, residues 145 to 157 (SGALFIQESLGWN) are extracellular. The helical transmembrane segment at 158-183 (LYVSVILLIGMTALLTVTGGLVAVIY) threads the bilayer. The Cytoplasmic segment spans residues 184 to 186 (TDT). Residues 187–205 (LQALLMIIGALTLMVISMV) traverse the membrane as a helical segment. At 206–303 (KIGGFEEVKR…HAKGSTLMAG (98 aa)) the chain is on the extracellular side. An N-linked (GlcNAc...) asparagine glycan is attached at asparagine 232. A helical membrane pass occupies residues 304 to 324 (FLKLLPMFIIVVPGMISRIVF). The Cytoplasmic portion of the chain corresponds to 325 to 353 (ADEIACINPEHCMQVCGSRAGCSNIAYPR). A helical membrane pass occupies residues 354-376 (LVMTLVPVGLRGLMMAVMIAALM). Topologically, residues 377-406 (SDLDSIFNSASTIFTLDVYKLIRKSASSRE) are extracellular. A helical membrane pass occupies residues 407 to 430 (LMIVGRIFVAFMVVISIAWVPIIV). At 431–443 (EMQGGQMYLYIQE) the chain is on the cytoplasmic side. The helical transmembrane segment at 444 to 462 (VADYLTPPVAALFLLAIFW) threads the bilayer. The Extracellular segment spans residues 463 to 510 (KRCNEQGAFYGGMAGFVLGAVRLILAFTYRAPECDQPDNRPGFIKDIH). The chain crosses the membrane as a helical span at residues 511–532 (YMYVATALFWITGLITVIVSLL). Residues 533–695 (TPPPTKDQIR…QMLEETPQVK (163 aa)) lie on the Cytoplasmic side of the membrane. 2 positions are modified to phosphoserine: serine 594 and serine 632. The chain crosses the membrane as a helical span at residues 696 to 716 (VILNIGLFAVCSLGIFMFVYF). Residues 717–718 (SL) lie on the Extracellular side of the membrane.

It belongs to the sodium:solute symporter (SSF) (TC 2.A.21) family. As to quaternary structure, interacts with KCNQ2 (via the pore module). Interacts with KCNQ1; this interaction is direct. Forms coregulatory complexes with ion channels KCNQ2-KCNQ3 and KCNQ1-KCNE2. In terms of tissue distribution, highly expressed in kidney, placenta, and brain and at a lesser extent in thymus, lung, bladder, and testes. Expressed in the choroid plexus epithelium (at protein level).

The protein localises to the apical cell membrane. It localises to the basolateral cell membrane. The catalysed reaction is myo-inositol(out) + 2 Na(+)(out) = myo-inositol(in) + 2 Na(+)(in). It catalyses the reaction scyllo-inositol(out) + 2 Na(+)(out) = scyllo-inositol(in) + 2 Na(+)(in). Its function is as follows. Electrogenic Na(+)-coupled sugar symporter that actively transports myo-inositol and its stereoisomer scyllo-inositol across the plasma membrane, with a Na(+) to sugar coupling ratio of 2:1. Maintains myo-inositol concentration gradient that defines cell volume and fluid balance during osmotic stress, in particular in the fetoplacental unit and central nervous system. Forms coregulatory complexes with voltage-gated K(+) ion channels, allosterically altering ion selectivity, voltage dependence and gating kinetics of the channel. In turn, K(+) efflux through the channel forms a local electrical gradient that modulates electrogenic Na(+)-coupled myo-inositol influx through the transporter. Associates with KCNQ1-KCNE2 channel in the apical membrane of choroid plexus epithelium and regulates the myo-inositol gradient between blood and cerebrospinal fluid with an impact on neuron excitability. Associates with KCNQ2-KCNQ3 channel altering ion selectivity, increasing Na(+) and Cs(+) permeation relative to K(+) permeation. Provides myo-inositol precursor for biosynthesis of phosphoinositides such as PI(4,5)P2, thus indirectly affecting the activity of phosphoinositide-dependent ion channels and Ca(2+) signaling upon osmotic stress. In terms of biological role, (Microbial infection) Functions as a retroviral receptor for M813 murine leukemia virus (MuLV) entry. This chain is Sodium/myo-inositol cotransporter (Slc5a3), found in Mus musculus (Mouse).